The following is a 356-amino-acid chain: Peptide chain release factor 1 (356 aa).

An N5-methylglutamine modification is found at Gln-233.

Belongs to the prokaryotic/mitochondrial release factor family. Post-translationally, methylated by PrmC. Methylation increases the termination efficiency of RF1.

The protein resides in the cytoplasm. Functionally, peptide chain release factor 1 directs the termination of translation in response to the peptide chain termination codons UAG and UAA. The chain is Peptide chain release factor 1 (prfA) from Bacillus subtilis (strain 168).